We begin with the raw amino-acid sequence, 207 residues long: VIFALVLGNASPVQSVAITATAVATAIGAASQIISAGTSLASTILSGLAASGYRVTCAIQVENWTRYPLIYATVQINRNAAVTVSPSSILPGKREGFSVRMPNGLAEGVYGTVSWELLGIKRRFVLMWSAPFNFNHFSNWMGVGLTRPGITKVPSGMTWFNKMYYDKTGRVGNLHFERGEFYYETNPVIYRDSKFEIEGTMTNIHNA.

A signal peptide spans 1–11 (VIFALVLGNAS). Residues 35 to 54 (SAGTSLASTILSGLAASGYR) are N-terminal region. Phosphocholine is bound by residues Gly-111, Ser-129, Pro-131, Tyr-164, and Tyr-165.

It belongs to the actinoporin family. Conoidea subfamily. Octamer or nonamer in membranes. Monomer in the soluble state. As to expression, expressed by the venom duct.

The protein resides in the secreted. Its subcellular location is the nematocyst. It localises to the target cell membrane. Its function is as follows. Pore-forming protein that forms pores of around 1 nm and causes cardiac stimulation and cytolysis. This is Tereporin-Ts1 from Terebra subulata (Chocolate spotted auger).